The primary structure comprises 531 residues: HERV-H LTR-associating protein 1 (531 aa).

The first 29 residues, 1–29 (MLGFLSRGPSMKLCMGLACVLSLWNTVSG), serve as a signal peptide directing secretion. Residues Asn79, Asn143, and Asn161 are each glycosylated (N-linked (GlcNAc...) asparagine). 2 disordered regions span residues 231–289 (GTAR…RPPE) and 340–362 (EKKP…GTEE). 2 stretches are compositionally biased toward polar residues: residues 232–269 (TART…SSPW) and 349–362 (ETRS…GTEE).

It is found in the secreted. The protein is HERV-H LTR-associating protein 1 (HHLA1) of Homo sapiens (Human).